Here is a 234-residue protein sequence, read N- to C-terminus: Probable transcriptional regulatory protein PSPPH_2212 (234 aa).

It belongs to the TACO1 family.

Its subcellular location is the cytoplasm. The chain is Probable transcriptional regulatory protein PSPPH_2212 from Pseudomonas savastanoi pv. phaseolicola (strain 1448A / Race 6) (Pseudomonas syringae pv. phaseolicola (strain 1448A / Race 6)).